Here is a 365-residue protein sequence, read N- to C-terminus: Putative agmatine deiminase (365 aa).

The agmatine site is built by Glu214 and Asp220. Residue Cys357 is the Amidino-cysteine intermediate of the active site.

The protein belongs to the agmatine deiminase family. Tetramer of two homodimers.

It carries out the reaction agmatine + H2O = N-carbamoylputrescine + NH4(+). The chain is Putative agmatine deiminase from Enterococcus faecalis (strain ATCC 700802 / V583).